We begin with the raw amino-acid sequence, 337 residues long: Pentalenene synthase (337 aa).

Residues Asp-80 and Asp-84 each contribute to the Mg(2+) site. The short motif at 80–84 is the DDXXD motif element; the sequence is DDLFD. Cys-128 and Cys-136 form a disulfide bridge. Asn-219, Ser-223, and Glu-227 together coordinate Mg(2+).

The protein belongs to the terpene synthase family. As to quaternary structure, monomer. Mg(2+) serves as cofactor.

The enzyme catalyses (2E,6E)-farnesyl diphosphate = pentalenene + diphosphate. It participates in sesquiterpene biosynthesis; pentalenene biosynthesis; pentalenene from farnesyl diphosphate: step 1/1. Its pathway is antibiotic biosynthesis; pentalenolactone biosynthesis. Catalyzes the cyclization of farnesyl diphosphate (FPP) to the tricyclic sesquiterpene pentalenene, which is the hydrocarbon precursor of the pentalenolactone family of antibiotics produced by a variety of Streptomyces species. In Streptomyces exfoliatus (Streptomyces hydrogenans), this protein is Pentalenene synthase (penA).